Here is a 273-residue protein sequence, read N- to C-terminus: Large ribosomal subunit protein uL2cz/uL2cy (273 aa).

2 disordered regions span residues 1–23 (MAIH…SQVK) and 224–273 (NPVD…RRRK).

This sequence belongs to the universal ribosomal protein uL2 family. In terms of assembly, part of the 50S ribosomal subunit.

It is found in the plastid. The protein resides in the chloroplast. The protein is Large ribosomal subunit protein uL2cz/uL2cy (rpl2-A) of Amborella trichopoda.